The sequence spans 716 residues: Exocyst complex component 8 (716 aa).

At Ser15 the chain carries Phosphoserine. The segment covering 110–119 (STGEDTAGAG) has biased composition (low complexity). The disordered stretch occupies residues 110–149 (STGEDTAGAGPRERGAAQAGFLPGPAGVPREGPGTGEEGK). Residues 173–273 (YLVYNGDLVE…WLEVLEETKR (101 aa)) enclose the PH domain. A compositionally biased stretch (basic and acidic residues) spans 275 to 284 (LSDKRRREQE). Residues 275 to 319 (LSDKRRREQEEAAALRAPPPVTSKGSNPFEDEAEEELATPEAEEE) are disordered. The segment covering 303-319 (FEDEAEEELATPEAEEE) has biased composition (acidic residues). Phosphothreonine is present on Thr313.

The protein belongs to the EXO84 family. The exocyst complex is composed of EXOC1, EXOC2, EXOC3, EXOC4, EXOC5, EXOC6, EXOC7 and EXOC8. Interacts (via PH domain) with GTP-bound RALA and RALB. Interacts with SH3BP1; required for the localization of both SH3BP1 and the exocyst to the leading edge of migrating cells.

The protein resides in the cytoplasm. It is found in the perinuclear region. Its subcellular location is the cell projection. It localises to the growth cone. In terms of biological role, component of the exocyst complex involved in the docking of exocytic vesicles with fusion sites on the plasma membrane. The protein is Exocyst complex component 8 (Exoc8) of Rattus norvegicus (Rat).